The chain runs to 93 residues: Probable Fe(2+)-trafficking protein (93 aa).

Belongs to the Fe(2+)-trafficking protein family.

In terms of biological role, could be a mediator in iron transactions between iron acquisition and iron-requiring processes, such as synthesis and/or repair of Fe-S clusters in biosynthetic enzymes. The protein is Probable Fe(2+)-trafficking protein of Acidithiobacillus ferrooxidans (strain ATCC 23270 / DSM 14882 / CIP 104768 / NCIMB 8455) (Ferrobacillus ferrooxidans (strain ATCC 23270)).